The following is a 117-amino-acid chain: Large ribosomal subunit protein bL20 (117 aa).

Belongs to the bacterial ribosomal protein bL20 family.

Binds directly to 23S ribosomal RNA and is necessary for the in vitro assembly process of the 50S ribosomal subunit. It is not involved in the protein synthesizing functions of that subunit. This is Large ribosomal subunit protein bL20 from Marinobacter nauticus (strain ATCC 700491 / DSM 11845 / VT8) (Marinobacter aquaeolei).